Here is a 572-residue protein sequence, read N- to C-terminus: Frizzled-7 (572 aa).

An N-terminal signal peptide occupies residues 1–32; sequence MRGPGTAASHSPLGLCALVLALLGALPTDTRA. Topologically, residues 33 to 254 are extracellular; it reads QPYHGEKGIS…EEERRFARLW (222 aa). Positions 44–163 constitute an FZ domain; the sequence is PDHGFCQPIS…HGAGEICVGQ (120 aa). Cystine bridges form between Cys49–Cys110, Cys57–Cys103, Cys94–Cys131, Cys120–Cys160, and Cys124–Cys148. An N-linked (GlcNAc...) asparagine glycan is attached at Asn63. Asn164 carries N-linked (GlcNAc...) asparagine glycosylation. Residues 255–275 traverse the membrane as a helical segment; it reads VGVWSVLCCASTLFTVLTYLV. Residues 276 to 286 lie on the Cytoplasmic side of the membrane; it reads DMRRFSYPERP. The helical transmembrane segment at 287 to 307 threads the bilayer; that stretch reads IIFLSGCYFMVAVAHVAGFLL. Residues 308–334 lie on the Extracellular side of the membrane; sequence EDRAVCVERFSDDGYRTVAQGTKKEGC. Residues 335–355 form a helical membrane-spanning segment; it reads TILFMVLYFFGMASSIWWVIL. The Cytoplasmic segment spans residues 356 to 377; it reads SLTWFLAAGMKWGHEAIEANSQ. The helical transmembrane segment at 378 to 398 threads the bilayer; it reads YFHLAAWAVPAVKTITILAMG. At 399–421 the chain is on the extracellular side; it reads QVDGDLLSGVCYVGLSSVDALRG. A helical transmembrane segment spans residues 422–442; that stretch reads FVLAPLFVYLFIGTSFLLAGF. The Cytoplasmic portion of the chain corresponds to 443–468; it reads VSLFRIRTIMKHDGTKTEKLEKLMVR. The helical transmembrane segment at 469 to 489 threads the bilayer; that stretch reads IGVFSVLYTVPATIVLACYFY. The Extracellular portion of the chain corresponds to 490 to 526; it reads EQAFREHWERTWLLQTCKSYAVPCPPGHFSPMSPDFT. The helical transmembrane segment at 527-547 threads the bilayer; it reads VFMIKYLMTMIVGITTGFWIW. Topologically, residues 548–572 are cytoplasmic; that stretch reads SGKTLQSWRRFYHRLSHSSKGETAV. The Lys-Thr-X-X-X-Trp motif, mediates interaction with the PDZ domain of Dvl family members signature appears at 550–555; it reads KTLQSW. The short motif at 570–572 is the PDZ-binding element; that stretch reads TAV.

It belongs to the G-protein coupled receptor Fz/Smo family. As to quaternary structure, interacts with MAGI3. Interacts with DVL1. Interacts with CCDC88C/DAPLE; the interaction displaces DVL1 from FZD7, leading to inhibition of canonical Wnt signaling and triggering of non-canonical Wnt responses. Interacts with MYOC. Binds to SDCBP; this interaction is increased by inositol trisphosphate (IP3). Interacts with glypican GPC3. Ubiquitinated by ZNRF3, leading to its degradation by the proteasome.

It is found in the cell membrane. The protein resides in the endosome membrane. Receptor for Wnt proteins. Most frizzled receptors are coupled to the beta-catenin canonical signaling pathway, which leads to the activation of disheveled proteins, inhibition of GSK-3 kinase, nuclear accumulation of beta-catenin and activation of Wnt target genes. A second signaling pathway involving PKC and calcium fluxes has been seen for some family members, but it is not yet clear if it represents a distinct pathway or if it can be integrated in the canonical pathway, as PKC seems to be required for Wnt-mediated inactivation of GSK-3 kinase. Both pathways seem to involve interactions with G-proteins. Activation by WNT8 induces expression of beta-catenin target genes. Following ligand activation, binds to CCDC88C/DAPLE which displaces DVL1 from FZD7 and leads to inhibition of canonical Wnt signaling, activation of G-proteins by CCDC88C and triggering of non-canonical Wnt responses. May be involved in transduction and intercellular transmission of polarity information during tissue morphogenesis and/or in differentiated tissues. This Mus musculus (Mouse) protein is Frizzled-7 (Fzd7).